The following is a 93-amino-acid chain: MISSNYSYPLDPSWNTEDITKVLRFLNQVEHAYENSVKVDDLLDSYKEFKKVVKSKAQEKQIDREFQRTSGYSTYQAVKAAQQQAKGFISLGR.

Belongs to the UPF0223 family.

The protein is UPF0223 protein gbs1030 of Streptococcus agalactiae serotype III (strain NEM316).